A 645-amino-acid polypeptide reads, in one-letter code: 1,4-alpha-glucan branching enzyme GlgB (645 aa).

Asp-309 acts as the Nucleophile in catalysis. Glu-352 serves as the catalytic Proton donor. The tract at residues 619–645 is disordered; it reads VKTRKGSKKQDGSKTKVRSNVTSRGKR. The span at 636-645 shows a compositional bias: polar residues; that stretch reads RSNVTSRGKR.

The protein belongs to the glycosyl hydrolase 13 family. GlgB subfamily. In terms of assembly, monomer.

It catalyses the reaction Transfers a segment of a (1-&gt;4)-alpha-D-glucan chain to a primary hydroxy group in a similar glucan chain.. It participates in glycan biosynthesis; glycogen biosynthesis. Catalyzes the formation of the alpha-1,6-glucosidic linkages in glycogen by scission of a 1,4-alpha-linked oligosaccharide from growing alpha-1,4-glucan chains and the subsequent attachment of the oligosaccharide to the alpha-1,6 position. In Bacillus anthracis (strain CDC 684 / NRRL 3495), this protein is 1,4-alpha-glucan branching enzyme GlgB.